Here is a 126-residue protein sequence, read N- to C-terminus: Probable small nuclear ribonucleoprotein Sm D1 (126 aa).

Positions 2–74 (KLVRFLMKLS…IRYIILPDPL (73 aa)) constitute a Sm domain. Positions 86–126 (RKKARAARAGASRGRGRGGMRGGRGGRGRGRGGPRGGGPRR) are disordered. A compositionally biased stretch (basic residues) spans 99-126 (GRGRGGMRGGRGGRGRGRGGPRGGGPRR).

The protein belongs to the snRNP core protein family.

The protein resides in the nucleus. The protein localises to the cytoplasm. It is found in the cytosol. Its function is as follows. Plays a role in pre-mRNA splicing as a core component of the spliceosomal U1, U2, U4 and U5 small nuclear ribonucleoproteins (snRNPs), the building blocks of the spliceosome. This is Probable small nuclear ribonucleoprotein Sm D1 (snr-3) from Caenorhabditis elegans.